The chain runs to 78 residues: Small ribosomal subunit protein bS18 (78 aa).

It belongs to the bacterial ribosomal protein bS18 family. As to quaternary structure, part of the 30S ribosomal subunit. Forms a tight heterodimer with protein bS6.

In terms of biological role, binds as a heterodimer with protein bS6 to the central domain of the 16S rRNA, where it helps stabilize the platform of the 30S subunit. The chain is Small ribosomal subunit protein bS18 from Lactobacillus delbrueckii subsp. bulgaricus (strain ATCC 11842 / DSM 20081 / BCRC 10696 / JCM 1002 / NBRC 13953 / NCIMB 11778 / NCTC 12712 / WDCM 00102 / Lb 14).